The following is a 197-amino-acid chain: dITP/XTP pyrophosphatase (197 aa).

8-13 contacts substrate; sequence TGNPGK. Glutamate 40 and aspartate 69 together coordinate Mg(2+). Residue aspartate 69 is the Proton acceptor of the active site. Residues serine 70, 154-157, lysine 177, and 182-183 contribute to the substrate site; these read FGYD and HR.

The protein belongs to the HAM1 NTPase family. As to quaternary structure, homodimer. Requires Mg(2+) as cofactor.

The catalysed reaction is XTP + H2O = XMP + diphosphate + H(+). The enzyme catalyses dITP + H2O = dIMP + diphosphate + H(+). It catalyses the reaction ITP + H2O = IMP + diphosphate + H(+). Pyrophosphatase that catalyzes the hydrolysis of nucleoside triphosphates to their monophosphate derivatives, with a high preference for the non-canonical purine nucleotides XTP (xanthosine triphosphate), dITP (deoxyinosine triphosphate) and ITP. Seems to function as a house-cleaning enzyme that removes non-canonical purine nucleotides from the nucleotide pool, thus preventing their incorporation into DNA/RNA and avoiding chromosomal lesions. The sequence is that of dITP/XTP pyrophosphatase from Yersinia pestis.